Consider the following 906-residue polypeptide: UPF0182 protein CA_C0010 (906 aa).

7 helical membrane passes run 7–29 (IVTI…DFII), 47–69 (LAAI…WFYY), 96–118 (VAIV…VYWY), 153–175 (LYGV…YIVL), 208–230 (FAII…SFNL), 250–272 (LVFY…TSII), and 279–301 (IFVS…EIVQ). The segment covering 842–862 (NSSNNQSETRTETGGTSTDSS) has biased composition (low complexity). Residues 842-875 (NSSNNQSETRTETGGTSTDSSNNKDKLKQAQDLY) are disordered.

Belongs to the UPF0182 family.

It is found in the cell membrane. This chain is UPF0182 protein CA_C0010, found in Clostridium acetobutylicum (strain ATCC 824 / DSM 792 / JCM 1419 / IAM 19013 / LMG 5710 / NBRC 13948 / NRRL B-527 / VKM B-1787 / 2291 / W).